A 204-amino-acid chain; its full sequence is MSKVTVLNDKFEKASELDLPAKYAEVNPHNLYLYVKSYLASLRANTAHTKGRSDVSGGGKKPWRQKGRGGARAGSTRTNVWVGGAVAFGPKNNRNYFQKVNKKQKRLALERALEDKAAKNALFSVDSLSIESGKTKDANAVIKKLGLKDVLIVKDLLDEKTLLAFRNLANCYVVDVNEVNAYLVSVFNAVIIEKAALESIVKEG.

A disordered region spans residues 49 to 75 (TKGRSDVSGGGKKPWRQKGRGGARAGS).

This sequence belongs to the universal ribosomal protein uL4 family. Part of the 50S ribosomal subunit.

Its function is as follows. One of the primary rRNA binding proteins, this protein initially binds near the 5'-end of the 23S rRNA. It is important during the early stages of 50S assembly. It makes multiple contacts with different domains of the 23S rRNA in the assembled 50S subunit and ribosome. Functionally, forms part of the polypeptide exit tunnel. This Campylobacter lari (strain RM2100 / D67 / ATCC BAA-1060) protein is Large ribosomal subunit protein uL4.